Consider the following 443-residue polypeptide: Protein IQ-DOMAIN 11 (443 aa).

The tract at residues 5-20 (KGLFTVLKRIFISEVN) is calmodulin-binding. 2 short sequence motifs (nuclear localization signal) span residues 11–18 (LKRIFISE) and 27–34 (RRKWTFWK). Positions 44–65 (ITAPPEHRTSHESHEEQKEEIV) are disordered. Positions 48 to 64 (PEHRTSHESHEEQKEEI) are enriched in basic and acidic residues. 2 consecutive IQ domains span residues 113–138 (AATR…GIVK) and 139–161 (LQAY…CLQS). Residues 277–293 (FSSKTKPKDETLNEKQL) are compositionally biased toward basic and acidic residues. The interval 277 to 361 (FSSKTKPKDE…PRSFDTQSES (85 aa)) is disordered.

It belongs to the IQD family. Binds to multiple calmodulin (CaM) in the presence of Ca(2+) and CaM-like proteins. As to expression, expressed in hypocotyls, cotyledons, leaves and petioles.

The protein resides in the nucleus. It localises to the cytoplasm. Its subcellular location is the cytoskeleton. Its function is as follows. May be involved in cooperative interactions with calmodulins or calmodulin-like proteins. Recruits calmodulin proteins to microtubules, thus being a potential scaffold in cellular signaling and trafficking. Regulates cell shape and elongation in aerial organs (i.e. epidermis pavement cells) probably by regulating cortical microtubules (MT) arrays orientation. May associate with nucleic acids and regulate gene expression at the transcriptional or post-transcriptional level. The polypeptide is Protein IQ-DOMAIN 11 (Arabidopsis thaliana (Mouse-ear cress)).